A 1662-amino-acid chain; its full sequence is ABC transporter A family member 5 (1662 aa).

7 helical membrane passes run 30-50 (IVFP…VQLF), 242-262 (SVFV…ELVV), 284-304 (ISWI…IIVI), 317-337 (IIVI…AFIF), 346-366 (FAGL…IFIG), 377-397 (LLLC…IMSI), and 417-437 (QIIG…WYLD). Residues 505 to 739 (ISIRNLRKEF…YGVGYLLTCS (235 aa)) enclose the ABC transporter 1 domain. Position 541–548 (541–548 (GPNGSGKS)) interacts with ATP. Helical transmembrane passes span 872–892 (FKAF…SIIV), 1052–1072 (IVYF…SFAG), 1102–1122 (LWDY…LAIV), 1130–1150 (FGLF…LSYL), 1163–1183 (GAIT…MIIL), 1201–1221 (IIDI…VIFI), and 1246–1266 (STPI…ILLI). In terms of domain architecture, ABC transporter 2 spans 1322–1557 (LQYKGLHKLF…FGAGYSVEVK (236 aa)). An ATP-binding site is contributed by 1360 to 1367 (GLNGAGKT).

It belongs to the ABC transporter superfamily. ABCA family.

The protein localises to the membrane. The sequence is that of ABC transporter A family member 5 (abcA5) from Dictyostelium discoideum (Social amoeba).